The chain runs to 415 residues: MEKNGAHSFLSDTPVTSLTMSVPVLRHPHVYHAFISYCADADTSHARTILDSVESRGFTCCFAERDFLPGECTSDVVVDAIHCSKNVILVISPASLQSEWSKFEMLMAVDDSHQRNNVCLVPVLLGGVKVDDLPPPLRPLTCIELMDDFRNTDDIIQAISKPEDTWESLLPVGNLAHGFAWGYYYGYLKIILPDLDKTVRQWRRVNNAEGRMSEKLFLFFPQSCRCRDSIADESSLIKHRGHLPIITKDRAGIIERQYKNTIYSVTDDNGEDYFFAGEYIGVIHTMFEMEQNATTGLQTREKYVQSMRFYLTLKRILDTDPECSKKCKIVFYKDVNNSSDAMPKLICNEIKNQLRKESSDDTTVCMTPFNSPFPSISSPDFARCSLKSPSSTNMVKSEPNIYREESGKTKSVERG.

In terms of domain architecture, TIR spans 29–163 (HVYHAFISYC…DIIQAISKPE (135 aa)). The active site involves Glu-104. Residue Arg-256 participates in 2',3'-cGAMP binding. The segment at 387-415 (KSPSSTNMVKSEPNIYREESGKTKSVERG) is disordered. Positions 401–415 (IYREESGKTKSVERG) are enriched in basic and acidic residues.

It in the N-terminal section; belongs to the Toll-like receptor family. In the C-terminal section; belongs to the TMEM173 family. As to quaternary structure, homodimer.

The catalysed reaction is NAD(+) + H2O = ADP-D-ribose + nicotinamide + H(+). Its function is as follows. Sensor of cytosolic DNA from bacteria and viruses that promotes autophagy. Binds c-di-AMP, 2'3'-cGAMP, 3'3'-cGAMP and to a lesser extent c-di-GMP. Nucleotide binding has not been seen to stimulate NAD(+) hydrolase activity. The sequence is that of Stimulator of interferon genes protein from Magallana gigas (Pacific oyster).